We begin with the raw amino-acid sequence, 258 residues long: Imidazole glycerol phosphate synthase subunit HisF (258 aa).

Catalysis depends on residues aspartate 11 and aspartate 130.

This sequence belongs to the HisA/HisF family. Heterodimer of HisH and HisF.

The protein resides in the cytoplasm. It catalyses the reaction 5-[(5-phospho-1-deoxy-D-ribulos-1-ylimino)methylamino]-1-(5-phospho-beta-D-ribosyl)imidazole-4-carboxamide + L-glutamine = D-erythro-1-(imidazol-4-yl)glycerol 3-phosphate + 5-amino-1-(5-phospho-beta-D-ribosyl)imidazole-4-carboxamide + L-glutamate + H(+). The protein operates within amino-acid biosynthesis; L-histidine biosynthesis; L-histidine from 5-phospho-alpha-D-ribose 1-diphosphate: step 5/9. Functionally, IGPS catalyzes the conversion of PRFAR and glutamine to IGP, AICAR and glutamate. The HisF subunit catalyzes the cyclization activity that produces IGP and AICAR from PRFAR using the ammonia provided by the HisH subunit. This chain is Imidazole glycerol phosphate synthase subunit HisF, found in Klebsiella pneumoniae (strain 342).